The chain runs to 333 residues: MKIAIDGMGGDNAPSAVVEGVVSALKEYSEMTFYITGPEDKISLELSKYDYPKDKIIIIDAKEVISTNEHPVMALRRKKDSSIVKALNLVKDAHCDGIISAGSTGAFLAGCTLIVGRIKGVERPALGPIMPGRRGNFMIVDAGANVDSKPEYLVQFSKMGSIYYKNVFNVDIPSVGLLNIGAEEEKGNDLTKATYKLLKEENSINFVGNIEPRYIPTGDTNIIVSDGFAGNTALKMYEGSAKNILGMIKDEVLKADLKSKIGVLLLKPFLKRIMKKFDYKEYGGAPFLGVNGICIKAHGSSDGKAFKNAIRQTKIFYENNVLDEIKKEFEKKN.

The protein belongs to the PlsX family. As to quaternary structure, homodimer. Probably interacts with PlsY.

It is found in the cytoplasm. The catalysed reaction is a fatty acyl-[ACP] + phosphate = an acyl phosphate + holo-[ACP]. The protein operates within lipid metabolism; phospholipid metabolism. Functionally, catalyzes the reversible formation of acyl-phosphate (acyl-PO(4)) from acyl-[acyl-carrier-protein] (acyl-ACP). This enzyme utilizes acyl-ACP as fatty acyl donor, but not acyl-CoA. The polypeptide is Phosphate acyltransferase (Clostridium botulinum (strain Alaska E43 / Type E3)).